We begin with the raw amino-acid sequence, 704 residues long: RCC1 domain-containing protein DDB_G0295713 (704 aa).

2 RCC1 repeats span residues 1 to 48 and 69 to 120; these read MYCW…VKGE and KNRC…ITDQ. Positions 221 to 246 are disordered; sequence YNNNNNNNNNNNNNNNNNNNNNNNNN. The segment covering 222–246 has biased composition (low complexity); sequence NNNNNNNNNNNNNNNNNNNNNNNNN. An RCC1 3 repeat occupies 298-348; that stretch reads QNQVYGWGENLNGQLGIEGIDYSTEPILIELPLVEIKHISSGAYHSAFVTN. A compositionally biased stretch (basic and acidic residues) spans 412–431; it reads IKDKNENNETKHTNKNKDNH. Residues 412 to 458 are disordered; it reads IKDKNENNETKHTNKNKDNHDDDDESDHSDDDHHDDDDNDKDSQGIN. Positions 432–451 are enriched in acidic residues; that stretch reads DDDDESDHSDDDHHDDDDND. The stretch at 668–698 forms a coiled coil; the sequence is IEQTSTQVANSENENENEIEMKMKMKKNEMK.

The sequence is that of RCC1 domain-containing protein DDB_G0295713 from Dictyostelium discoideum (Social amoeba).